The following is a 375-amino-acid chain: MPHKVFISRLKLTDFRNYAAAALTLDERHVVLTGDNGAGKTNLMEAVSLLSPGRGLRRAAYADVVRVAAPNGFSIFAELEGMEDTVEIGTGVDTSDETTARKLRINGTPAKTVDELTDHLRVLWLTPAMDGLFTGGSSERRRFLDRLVLSLDPAHGRRASDFERAMRSRNRLLSESRFDPSWLAGIEEQMASLGIAMALARQEMLGLLTRLIAETREATPFPSAALELSGFLDGQFDRPALDLEDAYAGMLREGRYRDAAAGRTLDGPHRTDLLVRHREKDMEAERCSTGEQKALLVGLILAHARLVGNLTGHAPVLLLDEIAAHLDEGRRAALFDLIDRLGGQAFMTGTDRAMFSALGERAQFFTVAHGGITKS.

An ATP-binding site is contributed by 34-41 (GDNGAGKT).

Belongs to the RecF family.

Its subcellular location is the cytoplasm. The RecF protein is involved in DNA metabolism; it is required for DNA replication and normal SOS inducibility. RecF binds preferentially to single-stranded, linear DNA. It also seems to bind ATP. This Rhizobium rhizogenes (strain K84 / ATCC BAA-868) (Agrobacterium radiobacter) protein is DNA replication and repair protein RecF.